A 153-amino-acid polypeptide reads, in one-letter code: uncharacterized protein (153 aa).

Belongs to the RusA family.

This is an uncharacterized protein from Xylella fastidiosa (strain Temecula1 / ATCC 700964).